A 224-amino-acid chain; its full sequence is MGQKVHPIGFRLGVIRSWDSKWYEEKNYAKWLHEDIHLREYVKEKLGQAGISRIEIERAANKVKINVHTARPGIVIGKRGAGIETIKKELQGKTDNEVYLNVVEVRKAETDAQLVAENIATQLERRIAFRRAMKKSVQTALKFGAKGIRVACSGRLGGSEMARYEWYREGRVPLHTLRADIDYGFAEAKTTYGKIGCKVWIMRGEVLPQSASARPPRSAGGARP.

The region spanning 38-106 (LREYVKEKLG…EVYLNVVEVR (69 aa)) is the KH type-2 domain.

Belongs to the universal ribosomal protein uS3 family. In terms of assembly, part of the 30S ribosomal subunit. Forms a tight complex with proteins S10 and S14.

Functionally, binds the lower part of the 30S subunit head. Binds mRNA in the 70S ribosome, positioning it for translation. The chain is Small ribosomal subunit protein uS3 from Anaeromyxobacter sp. (strain Fw109-5).